Reading from the N-terminus, the 355-residue chain is Uroporphyrinogen decarboxylase (355 aa).

Residues 27–31 (RQAGR), D78, Y155, S210, and H328 contribute to the substrate site.

Belongs to the uroporphyrinogen decarboxylase family. In terms of assembly, homodimer.

It localises to the cytoplasm. It carries out the reaction uroporphyrinogen III + 4 H(+) = coproporphyrinogen III + 4 CO2. Its pathway is porphyrin-containing compound metabolism; protoporphyrin-IX biosynthesis; coproporphyrinogen-III from 5-aminolevulinate: step 4/4. Functionally, catalyzes the decarboxylation of four acetate groups of uroporphyrinogen-III to yield coproporphyrinogen-III. The protein is Uroporphyrinogen decarboxylase of Pseudomonas paraeruginosa (strain DSM 24068 / PA7) (Pseudomonas aeruginosa (strain PA7)).